The primary structure comprises 358 residues: 3-dehydroquinate synthase (358 aa).

NAD(+) contacts are provided by residues 105–109, 129–130, K142, K151, and 169–172; these read GVVGD, TT, and TLKT. 3 residues coordinate Zn(2+): E184, H245, and H262.

This sequence belongs to the sugar phosphate cyclases superfamily. Dehydroquinate synthase family. It depends on NAD(+) as a cofactor. The cofactor is Co(2+). Zn(2+) is required as a cofactor.

It localises to the cytoplasm. It catalyses the reaction 7-phospho-2-dehydro-3-deoxy-D-arabino-heptonate = 3-dehydroquinate + phosphate. It functions in the pathway metabolic intermediate biosynthesis; chorismate biosynthesis; chorismate from D-erythrose 4-phosphate and phosphoenolpyruvate: step 2/7. Functionally, catalyzes the conversion of 3-deoxy-D-arabino-heptulosonate 7-phosphate (DAHP) to dehydroquinate (DHQ). This is 3-dehydroquinate synthase from Enterococcus faecalis (strain ATCC 700802 / V583).